The sequence spans 69 residues: DNA-directed RNA polymerase subunit epsilon (69 aa).

Belongs to the RNA polymerase subunit epsilon family. In terms of assembly, RNAP is composed of a core of 2 alpha, a beta and a beta' subunit. The core is associated with a delta subunit, and at least one of epsilon or omega. When a sigma factor is associated with the core the holoenzyme is formed, which can initiate transcription.

It carries out the reaction RNA(n) + a ribonucleoside 5'-triphosphate = RNA(n+1) + diphosphate. Functionally, a non-essential component of RNA polymerase (RNAP). The chain is DNA-directed RNA polymerase subunit epsilon from Geobacillus sp. (strain WCH70).